Here is a 138-residue protein sequence, read N- to C-terminus: Small ribosomal subunit protein uS11c (138 aa).

The interval 1-21 (MAKSIPKIGSRKTGRIGSRKH) is disordered. The segment covering 9-21 (GSRKTGRIGSRKH) has biased composition (basic residues).

This sequence belongs to the universal ribosomal protein uS11 family. Part of the 30S ribosomal subunit.

Its subcellular location is the plastid. The protein resides in the chloroplast. In Pisum sativum (Garden pea), this protein is Small ribosomal subunit protein uS11c.